The following is a 213-amino-acid chain: Thiopurine S-methyltransferase (213 aa).

S-adenosyl-L-methionine-binding residues include Trp-10, Leu-45, Glu-66, and Arg-121.

The protein belongs to the class I-like SAM-binding methyltransferase superfamily. TPMT family.

It is found in the cytoplasm. It catalyses the reaction S-adenosyl-L-methionine + a thiopurine = S-adenosyl-L-homocysteine + a thiopurine S-methylether.. The sequence is that of Thiopurine S-methyltransferase from Aliivibrio fischeri (strain ATCC 700601 / ES114) (Vibrio fischeri).